Consider the following 338-residue polypeptide: Ferrochelatase (338 aa).

Residues His202 and Glu283 each contribute to the Fe cation site.

It belongs to the ferrochelatase family.

It is found in the cytoplasm. It catalyses the reaction heme b + 2 H(+) = protoporphyrin IX + Fe(2+). It participates in porphyrin-containing compound metabolism; protoheme biosynthesis; protoheme from protoporphyrin-IX: step 1/1. Its function is as follows. Catalyzes the ferrous insertion into protoporphyrin IX. The protein is Ferrochelatase of Acinetobacter baumannii (strain ATCC 17978 / DSM 105126 / CIP 53.77 / LMG 1025 / NCDC KC755 / 5377).